A 267-amino-acid chain; its full sequence is uncharacterized protein (267 aa).

This is an uncharacterized protein from Escherichia coli (strain K12).